The sequence spans 490 residues: Cytochrome P450 2C26 (490 aa).

Position 435 (Cys-435) interacts with heme.

Belongs to the cytochrome P450 family. Heme is required as a cofactor.

It localises to the endoplasmic reticulum membrane. Its subcellular location is the microsome membrane. It catalyses the reaction an organic molecule + reduced [NADPH--hemoprotein reductase] + O2 = an alcohol + oxidized [NADPH--hemoprotein reductase] + H2O + H(+). Functionally, catalyzes the hydroxylation of tolbutamide and the N-demethylation of aminopyrine and benzphetamine. This is Cytochrome P450 2C26 (CYP2C26) from Mesocricetus auratus (Golden hamster).